The primary structure comprises 258 residues: 5'-nucleotidase SurE (258 aa).

A divalent metal cation-binding residues include Asp-10, Asp-11, Ser-41, and Asn-96.

Belongs to the SurE nucleotidase family. Requires a divalent metal cation as cofactor.

It is found in the cytoplasm. It catalyses the reaction a ribonucleoside 5'-phosphate + H2O = a ribonucleoside + phosphate. Functionally, nucleotidase that shows phosphatase activity on nucleoside 5'-monophosphates. The protein is 5'-nucleotidase SurE of Sorangium cellulosum (strain So ce56) (Polyangium cellulosum (strain So ce56)).